Consider the following 217-residue polypeptide: Large ribosomal subunit protein uL16 (217 aa).

The protein belongs to the universal ribosomal protein uL16 family. In terms of assembly, component of the small ribosomal subunit. Mature ribosomes consist of a small (40S) and a large (60S) subunit. The 40S subunit contains about 33 different proteins and 1 molecule of RNA (18S). The 60S subunit contains about 49 different proteins and 3 molecules of RNA (25S, 5.8S and 5S).

The polypeptide is Large ribosomal subunit protein uL16 (rpl10) (Dictyostelium discoideum (Social amoeba)).